Consider the following 74-residue polypeptide: ATP synthase subunit c (74 aa).

2 consecutive transmembrane segments (helical) span residues 5–25 (LAHI…IGVG) and 49–69 (LFIG…VALL).

The protein belongs to the ATPase C chain family. F-type ATPases have 2 components, F(1) - the catalytic core - and F(0) - the membrane proton channel. F(1) has five subunits: alpha(3), beta(3), gamma(1), delta(1), epsilon(1). F(0) has three main subunits: a(1), b(2) and c(10-14). The alpha and beta chains form an alternating ring which encloses part of the gamma chain. F(1) is attached to F(0) by a central stalk formed by the gamma and epsilon chains, while a peripheral stalk is formed by the delta and b chains.

The protein resides in the cell inner membrane. F(1)F(0) ATP synthase produces ATP from ADP in the presence of a proton or sodium gradient. F-type ATPases consist of two structural domains, F(1) containing the extramembraneous catalytic core and F(0) containing the membrane proton channel, linked together by a central stalk and a peripheral stalk. During catalysis, ATP synthesis in the catalytic domain of F(1) is coupled via a rotary mechanism of the central stalk subunits to proton translocation. Its function is as follows. Key component of the F(0) channel; it plays a direct role in translocation across the membrane. A homomeric c-ring of between 10-14 subunits forms the central stalk rotor element with the F(1) delta and epsilon subunits. This is ATP synthase subunit c from Ruegeria pomeroyi (strain ATCC 700808 / DSM 15171 / DSS-3) (Silicibacter pomeroyi).